A 1179-amino-acid chain; its full sequence is Probable manganese-transporting ATPase PDR2 (1179 aa).

Residues 1–20 are Cytoplasmic-facing; it reads MSSFRVGGKVVEKVDLCRKK. Residues 21–42 form a helical membrane-spanning segment; the sequence is QLVWRLDVWPFAILYTVWLTTI. Over 43–50 the chain is Lumenal; it reads VPSIDFSD. A helical membrane pass occupies residues 51–71; the sequence is ACIALGGLSAFHILVLLFTTW. At 72 to 192 the chain is on the cytoplasmic side; sequence SVDFKCFVQF…FDYPQPTFQK (121 aa). The chain crosses the membrane as a helical span at residues 193–215; it reads LMKENCMEPFFVFQVFCVGLWCL. At 216 to 218 the chain is on the lumenal side; sequence DEF. Residues 219 to 238 form a helical membrane-spanning segment; sequence WYYSVFTLFMLFMFESTMAK. At 239–402 the chain is on the cytoplasmic side; that stretch reads SRLKTLTDLR…ERVTANSWES (164 aa). A helical transmembrane segment spans residues 403 to 422; that stretch reads GLFILFLVVFAVIAAGYVLV. Topologically, residues 423–435 are lumenal; it reads KGLEDPTRSKYKL. The helical transmembrane segment at 436–453 threads the bilayer; that stretch reads LLGCSLIITSVIPPELPM. Over 454–947 the chain is Cytoplasmic; that stretch reads ELSIAVNTSL…RQGRSTLVTT (494 aa). Asp491 functions as the 4-aspartylphosphate intermediate in the catalytic mechanism. Mg(2+)-binding residues include Asp812 and Asp816. Residues 833 to 880 are disordered; that stretch reads KLPLSPSDSSKDDKSKSKKSKLPLEPASKTITQNGEGSSKGKIPPQNR. The helical transmembrane segment at 948-967 threads the bilayer; that stretch reads LQMFKILGLNCLATAYVLSV. Over 968–979 the chain is Lumenal; the sequence is MYLDGVKLGDVQ. A helical membrane pass occupies residues 980 to 997; that stretch reads ATISGVLTAAFFLFISHA. The Cytoplasmic portion of the chain corresponds to 998–1013; sequence RPLQTLSAERPHPSVF. Residues 1014–1034 traverse the membrane as a helical segment; that stretch reads SVYLFLSLIGQFAVHLTFLVY. Residues 1035 to 1059 are Lumenal-facing; it reads SVKEAEKHMPEECIEPDASFHPNLV. Residues 1060–1079 form a helical membrane-spanning segment; the sequence is NTVSYMVSMMLQVATFAVNY. The Cytoplasmic portion of the chain corresponds to 1080-1092; sequence MGHPFNQSIRENK. Residues 1093-1110 form a helical membrane-spanning segment; the sequence is PFFYALIAGAGFFTVIAS. The Lumenal segment spans residues 1111–1128; the sequence is DLFRDLNDSLKLVPLPQG. The chain crosses the membrane as a helical span at residues 1129-1148; it reads LRDKLLIWASLMFIICYSWE. At 1149–1179 the chain is on the cytoplasmic side; it reads RLLRWAFPGKISSWKHKQRAVTANLEKKKKV.

The protein belongs to the cation transport ATPase (P-type) (TC 3.A.3) family. Type V subfamily. Highly expressed in root meristem. Expressed in pavement cells of trichomes, stipules, stamens and pollen grains.

It localises to the endoplasmic reticulum membrane. The enzyme catalyses ATP + H2O = ADP + phosphate + H(+). Mediates manganese transport into the endoplasmic reticulum. The ATPase activity is required for cellular manganese homeostasis. Plays an important role in pollen and root development through its impact on protein secretion and transport processes. Functions together with LPR1 and LPR2 in a common pathway that adjusts root meristem activity to phosphate availability. Under phosphate limitation, restricts SHR movement in root meristem and is required for maintaining SCR expression in the root meristem stem-cell niche as well as for proximal meristem activity. Can complement the yeast spf1 mutant. The protein is Probable manganese-transporting ATPase PDR2 (PDR2) of Arabidopsis thaliana (Mouse-ear cress).